Reading from the N-terminus, the 251-residue chain is Coproheme decarboxylase (251 aa).

Fe-coproporphyrin III is bound by residues R133, 147–151, H174, Q187, and S225; that span reads YPMSK. Residue Y147 is part of the active site.

Belongs to the ChdC family. Type 1 subfamily. Requires Fe-coproporphyrin III as cofactor.

The enzyme catalyses Fe-coproporphyrin III + 2 H2O2 + 2 H(+) = heme b + 2 CO2 + 4 H2O. The catalysed reaction is Fe-coproporphyrin III + H2O2 + H(+) = harderoheme III + CO2 + 2 H2O. It carries out the reaction harderoheme III + H2O2 + H(+) = heme b + CO2 + 2 H2O. It participates in porphyrin-containing compound metabolism; protoheme biosynthesis. Involved in coproporphyrin-dependent heme b biosynthesis. Catalyzes the decarboxylation of Fe-coproporphyrin III (coproheme) to heme b (protoheme IX), the last step of the pathway. The reaction occurs in a stepwise manner with a three-propionate intermediate. This chain is Coproheme decarboxylase, found in Listeria welshimeri serovar 6b (strain ATCC 35897 / DSM 20650 / CCUG 15529 / CIP 8149 / NCTC 11857 / SLCC 5334 / V8).